Reading from the N-terminus, the 185-residue chain is NEDD8-conjugating enzyme UBE2F (185 aa).

Met-1 carries the N-acetylmethionine modification. The tract at residues 1-29 (MLTLASKLKRDDGLKGSRTAATASDSTRR) is interaction with UBA3. The 154-residue stretch at 32-185 (VRDKLLVKEV…VDDYIKRYAR (154 aa)) folds into the UBC core domain. The active-site Glycyl thioester intermediate is the Cys-116.

It belongs to the ubiquitin-conjugating enzyme family. UBE2F subfamily. In terms of assembly, interacts with UBA3 and RBX2. Interacts (N-terminally acetylated form) with (via DCUN1 domain) DCUN1D1, DCUN1D2, DCUN1D3, DCUN1D4 and DCUN1D5. Post-translationally, the acetylation of Met-1 increases affinity for DCUN1D3 by about 2 orders of magnitude and is crucial for NEDD8 transfer to cullins. As to expression, widely expressed (at protein level).

The enzyme catalyses [E1 NEDD8-activating enzyme]-S-[NEDD8 protein]-yl-L-cysteine + [E2 NEDD8-conjugating enzyme]-L-cysteine = [E1 NEDD8-activating enzyme]-L-cysteine + [E2 NEDD8-conjugating enzyme]-S-[NEDD8-protein]-yl-L-cysteine.. The protein operates within protein modification; protein neddylation. Functionally, accepts the ubiquitin-like protein NEDD8 from the UBA3-NAE1 E1 complex and catalyzes its covalent attachment to other proteins. Together with the E3 ubiquitin ligase RNF7/RBX2, specifically neddylates cullin-5 (CUL5). Does not neddylate CUL1, CUL2, CUL3, CUL4A or CUL4B. Mediates neddylation of the CUL9-RBX1 complex. (Microbial infection) Following infection by HIV-1 virus, participates to HIV-1 Vif protein-mediated ubiquitination and degradation of APOBEC3G by mediating neddylation of cullin-5 (CUL5). This chain is NEDD8-conjugating enzyme UBE2F (UBE2F), found in Homo sapiens (Human).